A 490-amino-acid polypeptide reads, in one-letter code: Bifunctional NAD(P)H-hydrate repair enzyme Nnr (490 aa).

The 204-residue stretch at 1–204 (MKEIDELTIK…NIGHPVHLIN (204 aa)) folds into the YjeF N-terminal domain. Residues 1 to 204 (MKEIDELTIK…NIGHPVHLIN (204 aa)) form an NAD(P)H-hydrate epimerase region. The NADPHX 1; for epimerase activity stretch occupies residues 51-55 (NNGGD). Residues N52 and D114 each contribute to the K(+) site. The tract at residues 118-124 (GTGLRGE) is NADPHX 1; for epimerase activity. (6S)-NADPHX is bound by residues Y129 and D147. S150 is a K(+) binding site. The 277-residue stretch at 212 to 488 (TREMVRSLLP…RLIPEAIRRL (277 aa)) folds into the YjeF C-terminal domain. The tract at residues 212–490 (TREMVRSLLP…IPEAIRRLKE (279 aa)) is ADP-dependent (S)-NAD(P)H-hydrate dehydratase. G317 lines the (6S)-NADPHX pocket. The interval 366 to 372 (HPGEMAR) is NADPHX 2; for dehydratase activity. Residues 402–406 (KSATT) and 421–430 (NTGLSKGGSG) contribute to the ADP site. (6S)-NADPHX is bound at residue D431.

This sequence in the N-terminal section; belongs to the NnrE/AIBP family. In the C-terminal section; belongs to the NnrD/CARKD family. Requires K(+) as cofactor.

It carries out the reaction (6S)-NADHX + ADP = AMP + phosphate + NADH + H(+). The enzyme catalyses (6S)-NADPHX + ADP = AMP + phosphate + NADPH + H(+). It catalyses the reaction (6R)-NADHX = (6S)-NADHX. The catalysed reaction is (6R)-NADPHX = (6S)-NADPHX. Its function is as follows. Bifunctional enzyme that catalyzes the epimerization of the S- and R-forms of NAD(P)HX and the dehydration of the S-form of NAD(P)HX at the expense of ADP, which is converted to AMP. This allows the repair of both epimers of NAD(P)HX, a damaged form of NAD(P)H that is a result of enzymatic or heat-dependent hydration. This is Bifunctional NAD(P)H-hydrate repair enzyme Nnr (nnr) from Thermotoga maritima (strain ATCC 43589 / DSM 3109 / JCM 10099 / NBRC 100826 / MSB8).